An 88-amino-acid chain; its full sequence is Small ribosomal subunit protein bS20 (88 aa).

It belongs to the bacterial ribosomal protein bS20 family.

Functionally, binds directly to 16S ribosomal RNA. The sequence is that of Small ribosomal subunit protein bS20 from Nitrobacter winogradskyi (strain ATCC 25391 / DSM 10237 / CIP 104748 / NCIMB 11846 / Nb-255).